The chain runs to 20 residues: Hemocyanin subunit II (20 aa).

A disordered region spans residues 1 to 20 (DVVASSTAHKQQDINHLLDK). Residues 10-20 (KQQDINHLLDK) are compositionally biased toward basic and acidic residues.

Belongs to the tyrosinase family. Hemocyanin subfamily. In terms of assembly, composed of 3 major subunits (IB, II and III) and 1 minor subunit (IA) which form homohexamers and heterohexamers. May also form larger structures. In terms of tissue distribution, hemolymph.

Its subcellular location is the secreted. It localises to the extracellular space. In terms of biological role, hemocyanins are copper-containing oxygen carriers occurring freely dissolved in the hemolymph of many mollusks and arthropods. The protein is Hemocyanin subunit II of Panulirus japonicus (Japanese spiny lobster).